The primary structure comprises 149 residues: Putative pre-16S rRNA nuclease (149 aa).

This sequence belongs to the YqgF nuclease family.

It localises to the cytoplasm. In terms of biological role, could be a nuclease involved in processing of the 5'-end of pre-16S rRNA. In Burkholderia lata (strain ATCC 17760 / DSM 23089 / LMG 22485 / NCIMB 9086 / R18194 / 383), this protein is Putative pre-16S rRNA nuclease.